A 660-amino-acid chain; its full sequence is Elongation factor 4 (660 aa).

Residues 55 to 241 (AQIRNFCIIA…EVVRQVPPPQ (187 aa)) enclose the tr-type G domain. GTP-binding positions include 67–72 (DHGKST) and 188–191 (NKID).

This sequence belongs to the TRAFAC class translation factor GTPase superfamily. Classic translation factor GTPase family. LepA subfamily.

The protein resides in the cell membrane. The catalysed reaction is GTP + H2O = GDP + phosphate + H(+). Required for accurate and efficient protein synthesis under certain stress conditions. May act as a fidelity factor of the translation reaction, by catalyzing a one-codon backward translocation of tRNAs on improperly translocated ribosomes. Back-translocation proceeds from a post-translocation (POST) complex to a pre-translocation (PRE) complex, thus giving elongation factor G a second chance to translocate the tRNAs correctly. Binds to ribosomes in a GTP-dependent manner. In Mycolicibacterium paratuberculosis (strain ATCC BAA-968 / K-10) (Mycobacterium paratuberculosis), this protein is Elongation factor 4.